Here is a 385-residue protein sequence, read N- to C-terminus: GDSL esterase/lipase At5g08460 (385 aa).

Positions 1 to 35 are cleaved as a signal peptide; that stretch reads MHDSEIFKFKDMMMMSCTVQTLVLVPWFLVVFVLA. Ser56 functions as the Nucleophile in the catalytic mechanism. 2 N-linked (GlcNAc...) asparagine glycosylation sites follow: Asn218 and Asn285. Residues Asp350 and His353 contribute to the active site. N-linked (GlcNAc...) asparagine glycans are attached at residues Asn368 and Asn378.

It belongs to the 'GDSL' lipolytic enzyme family.

It localises to the secreted. The sequence is that of GDSL esterase/lipase At5g08460 from Arabidopsis thaliana (Mouse-ear cress).